A 498-amino-acid chain; its full sequence is Probable dipeptidase B (498 aa).

Residue Cys-26 is part of the active site.

This sequence belongs to the peptidase C69 family.

The enzyme catalyses an L-aminoacyl-L-amino acid + H2O = 2 an L-alpha-amino acid. The chain is Probable dipeptidase B (pepDB) from Streptococcus pyogenes serotype M1.